The sequence spans 452 residues: Sulfide:quinone oxidoreductase, mitochondrial (452 aa).

FAD contacts are provided by residues 54–55 (AG), glutamate 77, glutamine 85, and valine 120. Cysteine 204 acts as the Cysteine persulfide intermediate in catalysis. Cysteine 204 and cysteine 380 are joined by a disulfide. FAD-binding positions include aspartate 337 and 345–348 (KTAA). The active-site Cysteine persulfide intermediate is cysteine 380.

Belongs to the SQRD family. FAD is required as a cofactor.

Its subcellular location is the mitochondrion. It catalyses the reaction ubiquinone-10 + hydrogen sulfide + sulfite + 2 H(+) = ubiquinol-10 + thiosulfate. The catalysed reaction is a quinone + hydrogen sulfide + glutathione + H(+) = S-sulfanylglutathione + a quinol. In terms of biological role, catalyzes the oxidation of hydrogen sulfide, with the help of a quinone. This Dictyostelium discoideum (Social amoeba) protein is Sulfide:quinone oxidoreductase, mitochondrial.